The following is a 558-amino-acid chain: 2-hydroxy-7-methoxy-5-methyl-1-naphthoate--CoA ligase (558 aa).

ATP contacts are provided by residues 212–213 (GG), 329–331 (ASR), Val-351, Asp-435, Arg-450, and Lys-542.

The protein belongs to the ATP-dependent AMP-binding enzyme family.

The enzyme catalyses 2-hydroxy-7-methoxy-5-methyl-1-naphthoate + ATP + CoA = 2-hydroxy-7-methoxy-5-methyl-1-naphthoyl-CoA + AMP + diphosphate. The protein operates within antibiotic biosynthesis. Catalyzes the activation of 2-hydroxy-7-methoxy-5-methyl-1-naphthoate in the biosynthesis of the naphthoate moiety of the neocarzinostatin chromophore. Also catalyzes the activation of other 1-naphthoic acid analogs such as 2-hydroxy-5-methyl-1-naphthoate or 2,7-dihydroxy-5-methyl-1-naphthoate in vitro. This is 2-hydroxy-7-methoxy-5-methyl-1-naphthoate--CoA ligase from Streptomyces carzinostaticus.